Here is a 293-residue protein sequence, read N- to C-terminus: ATP synthase gamma chain (293 aa).

This sequence belongs to the ATPase gamma chain family. As to quaternary structure, F-type ATPases have 2 components, CF(1) - the catalytic core - and CF(0) - the membrane proton channel. CF(1) has five subunits: alpha(3), beta(3), gamma(1), delta(1), epsilon(1). CF(0) has three main subunits: a, b and c.

It localises to the cell inner membrane. In terms of biological role, produces ATP from ADP in the presence of a proton gradient across the membrane. The gamma chain is believed to be important in regulating ATPase activity and the flow of protons through the CF(0) complex. The chain is ATP synthase gamma chain from Psychrobacter arcticus (strain DSM 17307 / VKM B-2377 / 273-4).